The sequence spans 316 residues: Transaldolase (316 aa).

Residue lysine 125 is the Schiff-base intermediate with substrate of the active site.

The protein belongs to the transaldolase family. Type 1 subfamily. Homodimer.

It is found in the cytoplasm. The enzyme catalyses D-sedoheptulose 7-phosphate + D-glyceraldehyde 3-phosphate = D-erythrose 4-phosphate + beta-D-fructose 6-phosphate. The protein operates within carbohydrate degradation; pentose phosphate pathway; D-glyceraldehyde 3-phosphate and beta-D-fructose 6-phosphate from D-ribose 5-phosphate and D-xylulose 5-phosphate (non-oxidative stage): step 2/3. Its function is as follows. Transaldolase is important for the balance of metabolites in the pentose-phosphate pathway. The protein is Transaldolase of Acidovorax ebreus (strain TPSY) (Diaphorobacter sp. (strain TPSY)).